Here is a 449-residue protein sequence, read N- to C-terminus: Protein adenylyltransferase FICD (449 aa).

The chain crosses the membrane as a helical span at residues 15-35 (LLWGWGPILFGLLGSVFVLLL). 2 TPR repeats span residues 96–129 (AKAALQQALEMKKSGKREKAHKLLVHALNMNPEF) and 130–163 (VEALTELGTILEEEKDVVQADHLYTKALAISPCH). Residues 220 to 225 (TVAIEG) carry the Inhibitory (S/T)XXXE(G/N) motif motif. Residues E224, 250 to 251 (EQ), 358 to 360 (GNG), and R364 contribute to the ATP site. Residues 275–410 (ITVNDILEIH…VRPFIRFIAK (136 aa)) enclose the Fido domain.

The protein belongs to the fic family.

The protein resides in the membrane. The enzyme catalyses L-tyrosyl-[protein] + ATP = O-(5'-adenylyl)-L-tyrosyl-[protein] + diphosphate. It carries out the reaction L-threonyl-[protein] + ATP = 3-O-(5'-adenylyl)-L-threonyl-[protein] + diphosphate. Its activity is regulated as follows. Adenylyltransferase activity is inhibited by the inhibitory helix present at the N-terminus: Glu-224 binds ATP and competes with ATP-binding at Arg-364, thereby preventing adenylyltransferase activity. Activation dissociates ATP-binding from Glu-224, allowing ordered binding of the entire ATP moiety with the alpha-phosphate in an orientation that is productive for accepting an incoming target hydroxyl side chain. Its function is as follows. Adenylyltransferase that mediates the addition of adenosine 5'-monophosphate (AMP) to specific residues of target proteins. The sequence is that of Protein adenylyltransferase FICD (ficd) from Danio rerio (Zebrafish).